The chain runs to 216 residues: Small ribosomal subunit protein uS3 (216 aa).

The KH type-2 domain occupies L38–K108.

This sequence belongs to the universal ribosomal protein uS3 family. Part of the 30S ribosomal subunit. Forms a tight complex with proteins S10 and S14.

Its function is as follows. Binds the lower part of the 30S subunit head. Binds mRNA in the 70S ribosome, positioning it for translation. The chain is Small ribosomal subunit protein uS3 from Desulfosudis oleivorans (strain DSM 6200 / JCM 39069 / Hxd3) (Desulfococcus oleovorans).